Reading from the N-terminus, the 695-residue chain is Follicle-stimulating hormone receptor (695 aa).

The N-terminal stretch at 1–17 is a signal peptide; the sequence is MALFLVALLAFLSLGSG. 2 disulfide bridges follow: cysteine 18/cysteine 25 and cysteine 23/cysteine 32. One can recognise an LRRNT domain in the interval 18–46; it reads CHHRLCHCSNGVFLCQDSKVTEMPSDLPR. At 18–366 the chain is on the extracellular side; the sequence is CHHRLCHCSN…EDIMGYDILR (349 aa). 9 LRR repeats span residues 48–70, 71–93, 96–118, 121–142, 143–167, 171–192, 194–216, 219–239, and 240–262; these read AVELRFVLTKLRVIPEGAFSGFG, DLEKIEISQNDVLEVIEANVFSN, KLHEIRIEKANNLLYIDPDAFQN, NLRYLLISNTGIKHLPAVHKIQ, SLQKVLLDIQDNINIHTVERNSFMG, ESMIVWLSKNGIQEIHNCAFNG, QLDELNLSDNSNLEELPNDVFQG, GPVILDISRTRIRSLPSYGLE, and NLKKLRAKSTYHLKKLPSLEKFV. 2 N-linked (GlcNAc...) asparagine glycosylation sites follow: asparagine 191 and asparagine 199. Intrachain disulfides connect cysteine 275-cysteine 346, cysteine 276-cysteine 292, cysteine 276-cysteine 356, and cysteine 292-cysteine 338. A glycan (N-linked (GlcNAc...) asparagine) is linked at asparagine 293. Residue tyrosine 335 is modified to Sulfotyrosine. Residues 367–387 traverse the membrane as a helical segment; it reads VLIWFISILAITGNILVLVIL. Over 388-398 the chain is Cytoplasmic; that stretch reads ITSQYKLTVPR. A helical membrane pass occupies residues 399 to 421; the sequence is FLMCNLAFADLCIGIYLLLIASV. Topologically, residues 422–443 are extracellular; the sequence is DVHTKSQYHNYAIDWQTGAGCD. A disulfide bridge connects residues cysteine 442 and cysteine 517. The helical transmembrane segment at 444-465 threads the bilayer; that stretch reads AAGFFTVFASELSVYTLTAITL. The Cytoplasmic portion of the chain corresponds to 466–485; that stretch reads ERWHTITHAMQLECKVHVRH. Residues 486-508 form a helical membrane-spanning segment; sequence AASIMLVGWVFAFAVALFPIFGI. At 509-528 the chain is on the extracellular side; that stretch reads SSYMKVSICLPMDIDSPLSQ. Residues 529-550 form a helical membrane-spanning segment; it reads LYVMSLLVLNVLAFVVICGCYT. The Cytoplasmic portion of the chain corresponds to 551–573; that stretch reads HIYLTVRNPNITSSSSDTKIAKR. The helical transmembrane segment at 574 to 597 threads the bilayer; sequence MAMLIFTDFLCMAPISFFAISASL. At 598-608 the chain is on the extracellular side; the sequence is KVPLITVSKSK. The helical transmembrane segment at 609-630 threads the bilayer; it reads ILLVLFYPINSCANPFLYAIFT. At 631–695 the chain is on the cytoplasmic side; it reads RNFRRDFFIL…LIPLRHLAKN (65 aa).

This sequence belongs to the G-protein coupled receptor 1 family. FSH/LSH/TSH subfamily. As to quaternary structure, homotrimer. Functions as a homotrimer binding the FSH hormone heterodimer composed of CGA and FSHB. Interacts with ARRB2. Interacts with APPL2; interaction is independent of follicle stimulating hormone stimulation. N-glycosylated; indirectly required for FSH-binding, possibly via a conformational change that allows high affinity binding of hormone. Post-translationally, sulfated. In terms of tissue distribution, isoform FSH-R3 is expressed in ovary and testis, but not in kidney (at protein level).

It is found in the cell membrane. Functionally, g protein-coupled receptor for follitropin, the follicle-stimulating hormone. The activity of isoform FSH-R1 is mediated by G proteins which activate adenylate cyclase. Isoform FSH-R2 and isoform FSH-R3 also bind FSH, but this does not result in activation of adenylate cyclase. Isoform FSH-R3 may be involved in calcium signaling. Through cAMP production activates the downstream PI3K-AKT and ERK1/ERK2 signaling pathways. The sequence is that of Follicle-stimulating hormone receptor (FSHR) from Ovis aries (Sheep).